Here is a 204-residue protein sequence, read N- to C-terminus: Methylthioribulose-1-phosphate dehydratase (204 aa).

The Zn(2+) site is built by H96 and H98.

It belongs to the aldolase class II family. MtnB subfamily. Requires Zn(2+) as cofactor.

The catalysed reaction is 5-(methylsulfanyl)-D-ribulose 1-phosphate = 5-methylsulfanyl-2,3-dioxopentyl phosphate + H2O. It participates in amino-acid biosynthesis; L-methionine biosynthesis via salvage pathway; L-methionine from S-methyl-5-thio-alpha-D-ribose 1-phosphate: step 2/6. Catalyzes the dehydration of methylthioribulose-1-phosphate (MTRu-1-P) into 2,3-diketo-5-methylthiopentyl-1-phosphate (DK-MTP-1-P). The protein is Methylthioribulose-1-phosphate dehydratase of Methylococcus capsulatus (strain ATCC 33009 / NCIMB 11132 / Bath).